The following is a 381-amino-acid chain: tRNA pseudouridine synthase D (381 aa).

The active-site Nucleophile is the Asp81. A TRUD domain is found at 160-335 (GMPNYFGSQR…TLGSRRFFWV (176 aa)).

Belongs to the pseudouridine synthase TruD family.

It catalyses the reaction uridine(13) in tRNA = pseudouridine(13) in tRNA. In terms of biological role, responsible for synthesis of pseudouridine from uracil-13 in transfer RNAs. In Helicobacter pylori (strain HPAG1), this protein is tRNA pseudouridine synthase D.